Consider the following 399-residue polypeptide: Glutamine synthetase 1, mitochondrial (399 aa).

A mitochondrion-targeting transit peptide spans 1–27; that stretch reads MALRVAGLFLKKELVAPATQQLRLLRT. In terms of domain architecture, GS beta-grasp spans 62 to 143; that stretch reads VQATYLWIDG…VLCDTYSADG (82 aa). A GS catalytic domain is found at 150–399; the sequence is KRAAFQAAID…AIVRTCLLNE (250 aa).

The protein belongs to the glutamine synthetase family. In terms of assembly, homooctamer.

Its subcellular location is the mitochondrion. The catalysed reaction is L-glutamate + NH4(+) + ATP = L-glutamine + ADP + phosphate + H(+). This chain is Glutamine synthetase 1, mitochondrial (Gs1), found in Drosophila melanogaster (Fruit fly).